The chain runs to 296 residues: MRIILITGISGSGKSVALNVLEDAGYYCVDNLPAQFIPDLACYLADQGYSQLGVATDIRSRESLARLPDTVRELAANHQVQVLYLTASTDALVQRYSETRRRHPLSAQVDVGAAAGTPNDTSLIEAIEKERELLSPLAESAHRIDTSNVRTNTLRSWIKELIQDENENKNSQQLTLLFESFGFKHGVPSDADLVFDVRSLPNPYYDLALRPLTGRDAPVIDFLQSQPMVLAMAEDIRAYVEKWLPSFIADNRSYLTVTIGCTGGQHRSVFIAERLANYFRAHGNVLVRHRELAPAG.

Position 8–15 (8–15 (GISGSGKS)) interacts with ATP. 57 to 60 (DIRS) provides a ligand contact to GTP.

The protein belongs to the RapZ-like family.

Displays ATPase and GTPase activities. The chain is Nucleotide-binding protein Rmet_0297 from Cupriavidus metallidurans (strain ATCC 43123 / DSM 2839 / NBRC 102507 / CH34) (Ralstonia metallidurans).